Reading from the N-terminus, the 302-residue chain is tRNA-cytidine(32) 2-sulfurtransferase (302 aa).

Positions 57–62 (SGGKDS) match the PP-loop motif motif. 3 residues coordinate [4Fe-4S] cluster: C132, C135, and C223.

This sequence belongs to the TtcA family. In terms of assembly, homodimer. Mg(2+) is required as a cofactor. Requires [4Fe-4S] cluster as cofactor.

The protein resides in the cytoplasm. It catalyses the reaction cytidine(32) in tRNA + S-sulfanyl-L-cysteinyl-[cysteine desulfurase] + AH2 + ATP = 2-thiocytidine(32) in tRNA + L-cysteinyl-[cysteine desulfurase] + A + AMP + diphosphate + H(+). It participates in tRNA modification. Its function is as follows. Catalyzes the ATP-dependent 2-thiolation of cytidine in position 32 of tRNA, to form 2-thiocytidine (s(2)C32). The sulfur atoms are provided by the cysteine/cysteine desulfurase (IscS) system. This is tRNA-cytidine(32) 2-sulfurtransferase from Marinobacter nauticus (strain ATCC 700491 / DSM 11845 / VT8) (Marinobacter aquaeolei).